A 342-amino-acid chain; its full sequence is S-adenosylmethionine:tRNA ribosyltransferase-isomerase (342 aa).

This sequence belongs to the QueA family. As to quaternary structure, monomer.

The protein resides in the cytoplasm. The enzyme catalyses 7-aminomethyl-7-carbaguanosine(34) in tRNA + S-adenosyl-L-methionine = epoxyqueuosine(34) in tRNA + adenine + L-methionine + 2 H(+). Its pathway is tRNA modification; tRNA-queuosine biosynthesis. Its function is as follows. Transfers and isomerizes the ribose moiety from AdoMet to the 7-aminomethyl group of 7-deazaguanine (preQ1-tRNA) to give epoxyqueuosine (oQ-tRNA). This Sulfurimonas denitrificans (strain ATCC 33889 / DSM 1251) (Thiomicrospira denitrificans (strain ATCC 33889 / DSM 1251)) protein is S-adenosylmethionine:tRNA ribosyltransferase-isomerase.